The following is a 207-amino-acid chain: Ribosomal RNA large subunit methyltransferase E (207 aa).

Residues glycine 61, tryptophan 63, aspartate 81, aspartate 97, and aspartate 122 each contribute to the S-adenosyl-L-methionine site. The active-site Proton acceptor is lysine 162.

It belongs to the class I-like SAM-binding methyltransferase superfamily. RNA methyltransferase RlmE family.

The protein localises to the cytoplasm. The enzyme catalyses uridine(2552) in 23S rRNA + S-adenosyl-L-methionine = 2'-O-methyluridine(2552) in 23S rRNA + S-adenosyl-L-homocysteine + H(+). Functionally, specifically methylates the uridine in position 2552 of 23S rRNA at the 2'-O position of the ribose in the fully assembled 50S ribosomal subunit. In Pseudomonas putida (strain ATCC 700007 / DSM 6899 / JCM 31910 / BCRC 17059 / LMG 24140 / F1), this protein is Ribosomal RNA large subunit methyltransferase E.